Here is a 1317-residue protein sequence, read N- to C-terminus: ABC transporter C family member 14 (1317 aa).

In terms of domain architecture, ABC transmembrane type-1 1 spans 119-404; it reads NKYALISNIF…LPEDIYKAIG (286 aa). Helical transmembrane passes span 127–147, 156–176, 249–269, 341–361, and 375–395; these read IFIT…INYI, SILK…GQSI, ILIL…VGFG, VLFW…VLVS, and LDVT…LIYL. Residues 426 to 451 form a disordered region; that stretch reads ENNQNINFNNNNNNNNNNKNNNNNDD. Low complexity predominate over residues 427-449; that stretch reads NNQNINFNNNNNNNNNNKNNNNN. Positions 490 to 710 constitute an ABC transporter 1 domain; sequence ENEENIKINE…ISDKNDPNLI (221 aa). Residue 522–529 coordinates ATP; the sequence is GVVGSGKT. 5 helical membrane passes run 734 to 754, 778 to 798, 871 to 891, 969 to 989, and 992 to 1012; these read YFSY…FFIG, DSFY…LLMI, LISI…LFII, LEVM…LFTS, and GLAA…SWGV. Residues 744–1027 form the ABC transmembrane type-1 2 domain; sequence LFITISLFFI…LEVKMNSFQR (284 aa). Residues 1071 to 1306 form the ABC transporter 2 domain; the sequence is IEFKNVEIKY…PNSKFNKLIK (236 aa). Residue 1105 to 1112 coordinates ATP; the sequence is GRTGAGKT.

The protein belongs to the ABC transporter superfamily. ABCC family. Conjugate transporter (TC 3.A.1.208) subfamily.

It localises to the membrane. This chain is ABC transporter C family member 14 (abcC14), found in Dictyostelium discoideum (Social amoeba).